Reading from the N-terminus, the 132-residue chain is Transmembrane protein 170B (132 aa).

Residues methionine 1–tryptophan 37 are Extracellular-facing. The N-linked (GlcNAc...) asparagine glycan is linked to asparagine 12. The chain crosses the membrane as a helical span at residues isoleucine 38–phenylalanine 58. The Cytoplasmic portion of the chain corresponds to valine 59–arginine 68. The chain crosses the membrane as a helical span at residues valine 69 to threonine 89. The Extracellular portion of the chain corresponds to serine 90 to methionine 104. A helical membrane pass occupies residues alanine 105 to phenylalanine 125. Residues serine 126–leucine 132 are Cytoplasmic-facing.

The protein belongs to the TMEM170 family. Interacts with CTNNB1.

It is found in the cell membrane. In Rattus norvegicus (Rat), this protein is Transmembrane protein 170B (Tmem170b).